Consider the following 379-residue polypeptide: Cytochrome b (379 aa).

Helical transmembrane passes span 33–53 (FGSL…FLAM), 77–98 (WLIR…YLHI), 113–133 (WNVG…GYVL), and 178–198 (FFAF…VHLI). The heme b site is built by histidine 83 and histidine 97. Heme b-binding residues include histidine 182 and histidine 196. Histidine 201 is a binding site for a ubiquinone. Transmembrane regions (helical) follow at residues 226 to 246 (YKDI…ALFS), 288 to 308 (LGGV…PLLH), 320 to 340 (FTQV…WIGG), and 347 to 367 (FIII…VLAP).

The protein belongs to the cytochrome b family. The cytochrome bc1 complex contains 3 respiratory subunits (MT-CYB, CYC1 and UQCRFS1), 2 core proteins (UQCRC1 and UQCRC2) and probably 6 low-molecular weight proteins. Requires heme b as cofactor.

Its subcellular location is the mitochondrion inner membrane. Functionally, component of the ubiquinol-cytochrome c reductase complex (complex III or cytochrome b-c1 complex) that is part of the mitochondrial respiratory chain. The b-c1 complex mediates electron transfer from ubiquinol to cytochrome c. Contributes to the generation of a proton gradient across the mitochondrial membrane that is then used for ATP synthesis. The chain is Cytochrome b (mt-cyb) from Poeciliopsis occidentalis (Gila topminnow).